Here is a 274-residue protein sequence, read N- to C-terminus: Penicillin-insensitive murein endopeptidase (274 aa).

A signal peptide spans 1–19; it reads MKKTAIALLAWFVSSASLA. 3 disulfide bridges follow: cysteine 44–cysteine 265, cysteine 187–cysteine 235, and cysteine 216–cysteine 223. Zn(2+) is bound by residues histidine 110, histidine 113, aspartate 120, aspartate 147, histidine 150, and histidine 211. Positions 225–274 are disordered; that stretch reads DQPLPPPGDGCGAELQSWFEPPKLGTTKPEKKTPPPLPPSCQALLDEHVL.

It belongs to the peptidase M74 family. Dimer. The cofactor is Zn(2+).

The protein resides in the periplasm. Its function is as follows. Murein endopeptidase that cleaves the D-alanyl-meso-2,6-diamino-pimelyl amide bond that connects peptidoglycan strands. Likely plays a role in the removal of murein from the sacculus. The protein is Penicillin-insensitive murein endopeptidase of Salmonella paratyphi B (strain ATCC BAA-1250 / SPB7).